Here is a 366-residue protein sequence, read N- to C-terminus: Aminomethyltransferase (366 aa).

The protein belongs to the GcvT family. The glycine cleavage system is composed of four proteins: P, T, L and H.

The catalysed reaction is N(6)-[(R)-S(8)-aminomethyldihydrolipoyl]-L-lysyl-[protein] + (6S)-5,6,7,8-tetrahydrofolate = N(6)-[(R)-dihydrolipoyl]-L-lysyl-[protein] + (6R)-5,10-methylene-5,6,7,8-tetrahydrofolate + NH4(+). The glycine cleavage system catalyzes the degradation of glycine. The polypeptide is Aminomethyltransferase (Sodalis glossinidius (strain morsitans)).